Consider the following 138-residue polypeptide: MSSSLYRVLRNAWEVGPRSYWKQLNSIGDTKSGRLVGTDIYGNKFYETDHQDEIHLRTRYVEYKEKDYDMSQVEPGWHFWLGYGVDTAPCNTPKEKLPIRAYPYKFQPNYTGTPGAFVTYNTLKPKISAWEPVTKQRS.

It belongs to the complex I NDUFA12 subunit family. As to quaternary structure, complex I is composed of 42 different subunits.

It localises to the mitochondrion inner membrane. Accessory subunit of the mitochondrial membrane respiratory chain NADH dehydrogenase (Complex I), that is believed not to be involved in catalysis. Complex I functions in the transfer of electrons from NADH to the respiratory chain. The immediate electron acceptor for the enzyme is believed to be ubiquinone. In Yarrowia lipolytica (strain CLIB 122 / E 150) (Yeast), this protein is NADH dehydrogenase [ubiquinone] 1 alpha subcomplex subunit N7BM.